We begin with the raw amino-acid sequence, 290 residues long: MRIFAGIIFTACCHLLRAFTITAPKDLYVVEYGSNVTMECRFPVERELDLLALVVYWEKEDEQVIQFVAGEEDLKPQHSNFRGRASLPKDQLLKGNAALQITDVKLQDAGVYCCIISYGGADYKRITLKVNAPYRKINQRISVDPATSEHELICQAEGYPEAEVIWTNSDHQPVSGKRSVTTSRTEGMLLNVTSSLRVNATANDVFYCTFWRSQPGQNHTAELIIPELPATHPPQNRTHWVLLGSILLFLIVVSTVLLFLRKQVRMLDVEKCGVEDTSSKNRNDTQFEET.

The first 18 residues, 1 to 18 (MRIFAGIIFTACCHLLRA), serve as a signal peptide directing secretion. An Ig-like V-type domain is found at 19–127 (FTITAPKDLY…YGGADYKRIT (109 aa)). Residues 19–239 (FTITAPKDLY…ATHPPQNRTH (221 aa)) lie on the Extracellular side of the membrane. N35 carries an N-linked (GlcNAc...) asparagine glycan. 2 disulfide bridges follow: C40–C114 and C154–C208. In terms of domain architecture, Ig-like C2-type spans 133 to 224 (PYRKINQRIS…PGQNHTAELI (92 aa)). 4 N-linked (GlcNAc...) asparagine glycosylation sites follow: N191, N199, N218, and N236. Residues 240 to 260 (WVLLGSILLFLIVVSTVLLFL) form a helical membrane-spanning segment. Topologically, residues 261 to 290 (RKQVRMLDVEKCGVEDTSSKNRNDTQFEET) are cytoplasmic.

The protein belongs to the immunoglobulin superfamily. BTN/MOG family. As to quaternary structure, interacts with PDCD1. Interacts with CMTM4 and CMTM6. Interacts with CD80. Ubiquitinated; STUB1 likely mediates polyubiquitination of PD-L1/CD274 triggering its degradation. Ubiquitinated by MARCHF8; leading to degradation. Deubiquitinated by USP22; leading to stabilization. In terms of tissue distribution, highly expressed in the heart, thymus, skeletal muscle, and lung. Weakly expressed in the kidney, spleen, thyroid, and liver. Expressed on activated dendritic cells, B-cells and macrophages. Expressed in numerous tumor cells lines of lymphoid origin.

It is found in the cell membrane. It localises to the early endosome membrane. The protein localises to the recycling endosome membrane. Its function is as follows. Plays a critical role in induction and maintenance of immune tolerance to self. As a ligand for the inhibitory receptor PDCD1/PD-1, modulates the activation threshold of T-cells and limits T-cell effector response. Through a yet unknown activating receptor, may costimulate T-cell subsets that predominantly produce interleukin-10 (IL10). The PDCD1-mediated inhibitory pathway is exploited by tumors to attenuate anti-tumor immunity and escape destruction by the immune system, thereby facilitating tumor survival. The interaction with PDCD1/PD-1 inhibits cytotoxic T lymphocytes (CTLs) effector function. The blockage of the PDCD1-mediated pathway results in the reversal of the exhausted T-cell phenotype and the normalization of the anti-tumor response, providing a rationale for cancer immunotherapy. The chain is Programmed cell death 1 ligand 1 (Cd274) from Mus musculus (Mouse).